An 856-amino-acid polypeptide reads, in one-letter code: MAP kinase phosphatase with leucine-rich repeats protein 3 (856 aa).

Over residues 1-10 (MGNSHSSENG) the composition is skewed to low complexity. 3 disordered regions span residues 1–24 (MGNSHSSENGGNSGSGGGSGGGGS), 84–195 (VKKN…SSVL), and 214–326 (DDNS…NAKD). Gly2 is lipidated: N-myristoyl glycine. Residues 11–24 (GNSGSGGGSGGGGS) are compositionally biased toward gly residues. Residues 90 to 142 (NSSNNNSNNNSNNNNNNNTLNNSTIITTTTTTTTTSTPTTTIMITPPQQQQQQ) are compositionally biased toward low complexity. Polar residues predominate over residues 155-165 (ESSTPNEQQIR). Low complexity-rich tracts occupy residues 178 to 195 (ESSFLKSSPVPSPSSSVL) and 224 to 243 (QQQQQQQNEDSKQSSQQQTQ). Composition is skewed to polar residues over residues 254–265 (IVNNKSSSTTNI) and 272–281 (AQTSRSTSIP). Residues 306 to 323 (NSLSSSNIITPNNTTNTN) are compositionally biased toward low complexity. 8 LRR repeats span residues 344–365 (KIFSLDLSINRLENITNDILSI), 370–391 (EIQELTLSTNFFQIIPDLQLVK), 392–413 (SLTTVNLTRNKLSKLQTSVFIE), 416–437 (SLTSLILDRNFISSIPDDIDQI), 439–461 (NLKYLSIKHNALEYLPNSLSNLS), 462–484 (QLISLDLSQNKLKTLPPNFDDLI), 485–506 (NLRMVWLSYNQITSLPSMRKLV), and 507–528 (NLVTFDISSNKLLSLPKDFAYL). The tract at residues 554-577 (NINSNNNDSNNSNNNNNNNNDNNN) is disordered. Residues 632–773 (IPSEIIPGIF…LLKYEAKLFC (142 aa)) form the Tyrosine-protein phosphatase domain. Cys717 acts as the Phosphocysteine intermediate in catalysis. The segment at 810-856 (INNSSNSNNNNSTDNSNNSSTSTTPNLSSLSSDSSSSASLSKLSISK) is disordered.

The protein belongs to the protein-tyrosine phosphatase family. Non-receptor class dual specificity subfamily.

It catalyses the reaction O-phospho-L-tyrosyl-[protein] + H2O = L-tyrosyl-[protein] + phosphate. It carries out the reaction O-phospho-L-seryl-[protein] + H2O = L-seryl-[protein] + phosphate. The enzyme catalyses O-phospho-L-threonyl-[protein] + H2O = L-threonyl-[protein] + phosphate. Functionally, probable phosphatase with dual specificity toward Ser/Thr and Tyr-containing proteins. The polypeptide is MAP kinase phosphatase with leucine-rich repeats protein 3 (mpl3) (Dictyostelium discoideum (Social amoeba)).